The sequence spans 456 residues: MPQNTLNTVILAAGKGTRMYSQMPKVLHCIGGKPMVERVIDTAAALNPQNICVVVGHGKEQVLDTVKRDAVWVEQTEQLGTGHAVKTALPHLASEGRTLVLYGDVPLIDVETLETLLEAAGNEVGLLTDVPADPAGLGRIIRDGSGSVTAIVEEKDASATQKTIREINTGILVLPNAKLENWLNSLSSNNAQGEYYLTDLIAKAVADGIKVRPVRVRASHLAAGVNNKRQLAELERIFQTEQAQELLKAGVTLRDPARFDLRGRLKHGQDVVIDVNVVIEGEVELGDNVEIGANCVIKNAKIGANSKIAPFSHLEGCEVGENNRIGPYARLRPQARLADDVHVGNFVEIKNAAIGKGTKANHLTYIGDAEVGSKTNFGAGTIIANYDGVHKHKTVIGDEVRIGSNCVLVAPVTLGNKVTTGAGSAITRNIEDNKLALARARQTVIEGWVRPEKNKQ.

Residues 1–228 form a pyrophosphorylase region; it reads MPQNTLNTVI…SHLAAGVNNK (228 aa). Residues 11 to 14, Lys25, Gln75, 80 to 81, 102 to 104, Gly138, Glu153, Asn168, and Asn226 contribute to the UDP-N-acetyl-alpha-D-glucosamine site; these read LAAG, GT, and YGD. A Mg(2+)-binding site is contributed by Asp104. Residue Asn226 coordinates Mg(2+). Residues 229-249 are linker; that stretch reads RQLAELERIFQTEQAQELLKA. An N-acetyltransferase region spans residues 250 to 456; the sequence is GVTLRDPARF…GWVRPEKNKQ (207 aa). Residues Arg332 and Lys350 each coordinate UDP-N-acetyl-alpha-D-glucosamine. His362 serves as the catalytic Proton acceptor. UDP-N-acetyl-alpha-D-glucosamine is bound by residues Tyr365 and Asn376. Acetyl-CoA-binding positions include Ala379, 385–386, Ser404, Ala422, and Arg439; that span reads NY.

The protein in the N-terminal section; belongs to the N-acetylglucosamine-1-phosphate uridyltransferase family. This sequence in the C-terminal section; belongs to the transferase hexapeptide repeat family. In terms of assembly, homotrimer. Mg(2+) serves as cofactor.

The protein localises to the cytoplasm. The enzyme catalyses alpha-D-glucosamine 1-phosphate + acetyl-CoA = N-acetyl-alpha-D-glucosamine 1-phosphate + CoA + H(+). The catalysed reaction is N-acetyl-alpha-D-glucosamine 1-phosphate + UTP + H(+) = UDP-N-acetyl-alpha-D-glucosamine + diphosphate. Its pathway is nucleotide-sugar biosynthesis; UDP-N-acetyl-alpha-D-glucosamine biosynthesis; N-acetyl-alpha-D-glucosamine 1-phosphate from alpha-D-glucosamine 6-phosphate (route II): step 2/2. It functions in the pathway nucleotide-sugar biosynthesis; UDP-N-acetyl-alpha-D-glucosamine biosynthesis; UDP-N-acetyl-alpha-D-glucosamine from N-acetyl-alpha-D-glucosamine 1-phosphate: step 1/1. The protein operates within bacterial outer membrane biogenesis; LPS lipid A biosynthesis. Functionally, catalyzes the last two sequential reactions in the de novo biosynthetic pathway for UDP-N-acetylglucosamine (UDP-GlcNAc). The C-terminal domain catalyzes the transfer of acetyl group from acetyl coenzyme A to glucosamine-1-phosphate (GlcN-1-P) to produce N-acetylglucosamine-1-phosphate (GlcNAc-1-P), which is converted into UDP-GlcNAc by the transfer of uridine 5-monophosphate (from uridine 5-triphosphate), a reaction catalyzed by the N-terminal domain. This is Bifunctional protein GlmU from Neisseria gonorrhoeae.